The primary structure comprises 222 residues: uncharacterized protein (222 aa).

Positions 1–27 (MSFTRRKFVLGMGTVIFFTGSASSLLA) form a signal peptide, tat-type signal. 4Fe-4S ferredoxin-type domains lie at 37–67 (YAMI…AQGS), 83–114 (TQYH…RDEQ), and 115–144 (GIVR…LNPV). [4Fe-4S] cluster is bound by residues C46, C49, C52, C56, C92, C95, C100, C104, C124, C127, C130, C134, C151, C154, C167, and C171.

Post-translationally, exported by the Tat system. The position of the signal peptide cleavage has not been experimentally proven. Can also be exported by the Sec system.

This is an uncharacterized protein from Escherichia coli (strain K12).